The chain runs to 530 residues: Ankyrin repeat domain-containing protein 53 (530 aa).

Low complexity predominate over residues 1-15; the sequence is MASAGSTARRAGSGS. Positions 1-99 are disordered; the sequence is MASAGSTARR…PSPSKESDQT (99 aa). Residues 32–41 are compositionally biased toward polar residues; sequence PSGSMQQANK. 3 ANK repeats span residues 139-169, 173-206, and 210-239; these read KGFT…PVDL, NSQT…DLNA, and NGST…NVHA. Disordered regions lie at residues 323–360 and 383–402; these read GHSL…VDAR and PTMW…QISH. 2 stretches are compositionally biased toward polar residues: residues 326-341 and 386-402; these read LVSN…LSKT and WNVS…QISH.

As to quaternary structure, interacts with PSRC1; recruited by PSRC1 to the spindle during mitosis. Post-translationally, phosphorylated during mitosis.

Its subcellular location is the cytoplasm. The protein resides in the cytoskeleton. It is found in the spindle. The protein localises to the spindle pole. Functionally, required for normal progression through mitosis. Involved in chromosome alignment and cytokinesis via regulation of microtubules polymerization. This is Ankyrin repeat domain-containing protein 53 (ANKRD53) from Homo sapiens (Human).